A 90-amino-acid chain; its full sequence is Large ribosomal subunit protein bL31 (90 aa).

The disordered stretch occupies residues 65-90 (YSKQEGSGSKSNKSKSTKSKKGKGKK). Residues 76–90 (NKSKSTKSKKGKGKK) show a composition bias toward basic residues.

It belongs to the bacterial ribosomal protein bL31 family. Type A subfamily. In terms of assembly, part of the 50S ribosomal subunit.

Functionally, binds the 23S rRNA. The protein is Large ribosomal subunit protein bL31 of Trichodesmium erythraeum (strain IMS101).